A 92-amino-acid chain; its full sequence is Small ribosomal subunit protein uS19 (92 aa).

Belongs to the universal ribosomal protein uS19 family.

In terms of biological role, protein S19 forms a complex with S13 that binds strongly to the 16S ribosomal RNA. The chain is Small ribosomal subunit protein uS19 from Vibrio campbellii (strain ATCC BAA-1116).